Reading from the N-terminus, the 316-residue chain is 4-diphosphocytidyl-2-C-methyl-D-erythritol kinase (316 aa).

Lys14 is an active-site residue. 96-106 (PMGAGLGGGSS) provides a ligand contact to ATP. The active site involves Asp138.

This sequence belongs to the GHMP kinase family. IspE subfamily.

It carries out the reaction 4-CDP-2-C-methyl-D-erythritol + ATP = 4-CDP-2-C-methyl-D-erythritol 2-phosphate + ADP + H(+). Its pathway is isoprenoid biosynthesis; isopentenyl diphosphate biosynthesis via DXP pathway; isopentenyl diphosphate from 1-deoxy-D-xylulose 5-phosphate: step 3/6. In terms of biological role, catalyzes the phosphorylation of the position 2 hydroxy group of 4-diphosphocytidyl-2C-methyl-D-erythritol. This is 4-diphosphocytidyl-2-C-methyl-D-erythritol kinase from Solibacter usitatus (strain Ellin6076).